Reading from the N-terminus, the 31-residue chain is Cytochrome b6-f complex subunit 6 (31 aa).

Residues 4-26 (IVSYFGFLLTASTITPALFIGLS) traverse the membrane as a helical segment.

It belongs to the PetL family. In terms of assembly, the 4 large subunits of the cytochrome b6-f complex are cytochrome b6, subunit IV (17 kDa polypeptide, PetD), cytochrome f and the Rieske protein, while the 4 small subunits are PetG, PetL, PetM and PetN. The complex functions as a dimer.

The protein resides in the plastid. The protein localises to the chloroplast thylakoid membrane. Its function is as follows. Component of the cytochrome b6-f complex, which mediates electron transfer between photosystem II (PSII) and photosystem I (PSI), cyclic electron flow around PSI, and state transitions. PetL is important for photoautotrophic growth as well as for electron transfer efficiency and stability of the cytochrome b6-f complex. The polypeptide is Cytochrome b6-f complex subunit 6 (Nymphaea alba (White water-lily)).